A 275-amino-acid polypeptide reads, in one-letter code: Polyamine aminopropyltransferase (275 aa).

Positions 2-235 (ELWFTEKQTK…GLWTFTIGSK (234 aa)) constitute a PABS domain. Glutamine 31 contacts S-methyl-5'-thioadenosine. Histidine 62 and aspartate 86 together coordinate spermidine. S-methyl-5'-thioadenosine contacts are provided by residues glutamate 106 and 137–138 (DG). Residue aspartate 155 is the Proton acceptor of the active site. Residue 155-158 (DSTE) coordinates spermidine. S-methyl-5'-thioadenosine is bound at residue proline 162.

The protein belongs to the spermidine/spermine synthase family. Homodimer or homotetramer.

Its subcellular location is the cytoplasm. The catalysed reaction is S-adenosyl 3-(methylsulfanyl)propylamine + putrescine = S-methyl-5'-thioadenosine + spermidine + H(+). It functions in the pathway amine and polyamine biosynthesis; spermidine biosynthesis; spermidine from putrescine: step 1/1. In terms of biological role, catalyzes the irreversible transfer of a propylamine group from the amino donor S-adenosylmethioninamine (decarboxy-AdoMet) to putrescine (1,4-diaminobutane) to yield spermidine. In Bacillus cytotoxicus (strain DSM 22905 / CIP 110041 / 391-98 / NVH 391-98), this protein is Polyamine aminopropyltransferase.